The following is a 651-amino-acid chain: Mediator of RNA polymerase II transcription subunit 17 (651 aa).

The interval 51 to 83 (QGSGSEEEEAAGAEGDAQDWAGAGSSADQDDEE) is disordered. Residues 62-74 (GAEGDAQDWAGAG) are compositionally biased toward low complexity.

This sequence belongs to the Mediator complex subunit 17 family. In terms of assembly, component of the Mediator complex, which is composed of MED1, MED4, MED6, MED7, MED8, MED9, MED10, MED11, MED12, MED13, MED13L, MED14, MED15, MED16, MED17, MED18, MED19, MED20, MED21, MED22, MED23, MED24, MED25, MED26, MED27, MED29, MED30, MED31, CCNC, CDK8 and CDC2L6/CDK11. The MED12, MED13, CCNC and CDK8 subunits form a distinct module termed the CDK8 module. Mediator containing the CDK8 module is less active than Mediator lacking this module in supporting transcriptional activation. Individual preparations of the Mediator complex lacking one or more distinct subunits have been variously termed ARC, CRSP, DRIP, PC2, SMCC and TRAP. Interacts with GATA1, PPARG and STAT2.

The protein resides in the nucleus. Its function is as follows. Component of the Mediator complex, a coactivator involved in the regulated transcription of nearly all RNA polymerase II-dependent genes. Mediator functions as a bridge to convey information from gene-specific regulatory proteins to the basal RNA polymerase II transcription machinery. Mediator is recruited to promoters by direct interactions with regulatory proteins and serves as a scaffold for the assembly of a functional preinitiation complex with RNA polymerase II and the general transcription factors. The protein is Mediator of RNA polymerase II transcription subunit 17 (MED17) of Bos taurus (Bovine).